The chain runs to 313 residues: Ribosomal RNA small subunit methyltransferase H (313 aa).

S-adenosyl-L-methionine-binding positions include 35 to 37, D55, F79, D101, and Q108; that span reads GGH.

It belongs to the methyltransferase superfamily. RsmH family.

The protein localises to the cytoplasm. It carries out the reaction cytidine(1402) in 16S rRNA + S-adenosyl-L-methionine = N(4)-methylcytidine(1402) in 16S rRNA + S-adenosyl-L-homocysteine + H(+). Functionally, specifically methylates the N4 position of cytidine in position 1402 (C1402) of 16S rRNA. The chain is Ribosomal RNA small subunit methyltransferase H from Shigella flexneri serotype 5b (strain 8401).